Consider the following 1040-residue polypeptide: Regulator of telomere elongation helicase 1 homolog (1040 aa).

The Helicase ATP-binding domain occupies 52-355 (RGINVEFPFE…KGLLLKLQEL (304 aa)). 87 to 94 (SPTGTGKT) serves as a coordination point for ATP. The disordered stretch occupies residues 117–137 (RKNSAIPWSDSDEPLSQSGGG). Residues Cys181, Cys202, Cys210, and Cys246 each contribute to the [4Fe-4S] cluster site. The short motif at 289–292 (DEAH) is the DEAH box element. The segment at 926–949 (KVPESQGSASSSVLTAKGNGGGDK) is disordered. Positions 930–939 (SQGSASSSVL) are enriched in polar residues. A PIP-box; degenerate motif is present at residues 992–999 (QSIVQLFC).

The protein belongs to the helicase family. RAD3/XPD subfamily.

The protein localises to the nucleus. The catalysed reaction is ATP + H2O = ADP + phosphate + H(+). In terms of biological role, a probable ATP-dependent DNA helicase implicated in DNA replication, DNA repair and the maintenance of genomic stability. Acts as an anti-recombinase to counteract toxic recombination and limit crossover during meiosis. Regulates meiotic recombination and crossover homeostasis by physically dissociating strand invasion events and thereby promotes noncrossover repair by meiotic synthesis dependent strand annealing (SDSA) as well as disassembly of D loop recombination intermediates. Also plays a role in preserving the stability of 45S rDNA repeats. This Arabidopsis thaliana (Mouse-ear cress) protein is Regulator of telomere elongation helicase 1 homolog.